Here is a 355-residue protein sequence, read N- to C-terminus: F-box only protein 32 (355 aa).

The Nuclear localization signal motif lies at 62-67 (KKRKKD). The Nuclear export signal motif lies at 169-173 (LLQTL). Residues 223–271 (LTITDLPVCLQLNIMQRLSDGRDLVSLGQAAPDLHVLSEDRLLWKRLCQ) form the F-box domain. The Bipartite nuclear localization signal motif lies at 280 to 295 (RKRLILSDKGQLDWKK).

As to quaternary structure, part of the SCF (SKP1-CUL1-F-box) E3 ubiquitin-protein ligase complex SCF(FBXO32) formed of CUL1, SKP1, RBX1 and FBXO32. Specifically expressed in cardiac and skeletal muscle.

Its subcellular location is the cytoplasm. It localises to the nucleus. Its pathway is protein modification; protein ubiquitination. In terms of biological role, substrate recognition component of a SCF (SKP1-CUL1-F-box protein) E3 ubiquitin-protein ligase complex which mediates the ubiquitination and subsequent proteasomal degradation of target proteins. Probably recognizes and binds to phosphorylated target proteins during skeletal muscle atrophy. Recognizes TERF1. The polypeptide is F-box only protein 32 (Fbxo32) (Mus musculus (Mouse)).